The sequence spans 224 residues: Large ribosomal subunit protein bL25 (224 aa).

The tract at residues 190-224 is disordered; sequence EPAPAAEGAAPAEGAAAAAAGGKPAAKTAKPAAKK.

The protein belongs to the bacterial ribosomal protein bL25 family. CTC subfamily. Part of the 50S ribosomal subunit; part of the 5S rRNA/L5/L18/L25 subcomplex. Contacts the 5S rRNA. Binds to the 5S rRNA independently of L5 and L18.

In terms of biological role, this is one of the proteins that binds to the 5S RNA in the ribosome where it forms part of the central protuberance. The protein is Large ribosomal subunit protein bL25 of Variovorax paradoxus (strain S110).